The chain runs to 365 residues: Phosphoserine aminotransferase (365 aa).

Residue Arg42 participates in L-glutamate binding. Pyridoxal 5'-phosphate-binding positions include 76–77 (GR), Trp102, Thr156, Asp175, and Gln198. Lys199 is modified (N6-(pyridoxal phosphate)lysine). 240–241 (NT) lines the pyridoxal 5'-phosphate pocket.

The protein belongs to the class-V pyridoxal-phosphate-dependent aminotransferase family. SerC subfamily. In terms of assembly, homodimer. It depends on pyridoxal 5'-phosphate as a cofactor.

The protein resides in the cytoplasm. It catalyses the reaction O-phospho-L-serine + 2-oxoglutarate = 3-phosphooxypyruvate + L-glutamate. The catalysed reaction is 4-(phosphooxy)-L-threonine + 2-oxoglutarate = (R)-3-hydroxy-2-oxo-4-phosphooxybutanoate + L-glutamate. The protein operates within amino-acid biosynthesis; L-serine biosynthesis; L-serine from 3-phospho-D-glycerate: step 2/3. It functions in the pathway cofactor biosynthesis; pyridoxine 5'-phosphate biosynthesis; pyridoxine 5'-phosphate from D-erythrose 4-phosphate: step 3/5. In terms of biological role, catalyzes the reversible conversion of 3-phosphohydroxypyruvate to phosphoserine and of 3-hydroxy-2-oxo-4-phosphonooxybutanoate to phosphohydroxythreonine. The polypeptide is Phosphoserine aminotransferase (Shewanella oneidensis (strain ATCC 700550 / JCM 31522 / CIP 106686 / LMG 19005 / NCIMB 14063 / MR-1)).